Here is a 395-residue protein sequence, read N- to C-terminus: Tyrosine--tRNA ligase 2 (395 aa).

The 'HIGH' region motif lies at 42-51; the sequence is PTAPDIHLGH. The 'KMSKS' region motif lies at 226–230; the sequence is KMSKS. K229 contributes to the ATP binding site. In terms of domain architecture, S4 RNA-binding spans 334–394; it reads IAISNLLKEA…GKRKFARVTI (61 aa).

It belongs to the class-I aminoacyl-tRNA synthetase family. TyrS type 2 subfamily. As to quaternary structure, homodimer.

It localises to the cytoplasm. The catalysed reaction is tRNA(Tyr) + L-tyrosine + ATP = L-tyrosyl-tRNA(Tyr) + AMP + diphosphate + H(+). Its function is as follows. Catalyzes the attachment of tyrosine to tRNA(Tyr) in a two-step reaction: tyrosine is first activated by ATP to form Tyr-AMP and then transferred to the acceptor end of tRNA(Tyr). The chain is Tyrosine--tRNA ligase 2 from Vibrio cholerae serotype O1 (strain ATCC 39315 / El Tor Inaba N16961).